Reading from the N-terminus, the 1550-residue chain is Pentafunctional AROM polypeptide (1550 aa).

A 3-dehydroquinate synthase region spans residues 1–379; that stretch reads MSIERVPILG…YQLKAHQVSK (379 aa). NAD(+) is bound by residues 42–44, 80–83, 111–113, and aspartate 116; these read DTN, ENNK, and GGV. Arginine 127 contributes to the 7-phospho-2-dehydro-3-deoxy-D-arabino-heptonate binding site. 136–137 contacts NAD(+); the sequence is TT. 7-phospho-2-dehydro-3-deoxy-D-arabino-heptonate-binding residues include aspartate 143 and lysine 149. Lysine 158 is an NAD(+) binding site. Asparagine 159 contributes to the 7-phospho-2-dehydro-3-deoxy-D-arabino-heptonate binding site. NAD(+) contacts are provided by residues 176–179 and asparagine 187; that span reads FLET. Glutamate 191 contacts Zn(2+). Residues 191 to 194 and lysine 243 contribute to the 7-phospho-2-dehydro-3-deoxy-D-arabino-heptonate site; that span reads EVVK. Glutamate 253 (proton acceptor; for 3-dehydroquinate synthase activity) is an active-site residue. Residues 257-261 and histidine 264 contribute to the 7-phospho-2-dehydro-3-deoxy-D-arabino-heptonate site; that span reads RNLLN. Histidine 264 is a Zn(2+) binding site. Catalysis depends on histidine 268, which acts as the Proton acceptor; for 3-dehydroquinate synthase activity. Histidine 280 and lysine 351 together coordinate 7-phospho-2-dehydro-3-deoxy-D-arabino-heptonate. Residue histidine 280 participates in Zn(2+) binding. Residues 392–837 are EPSP synthase; the sequence is VHPFTNPPKE…WDILHSKFKI (446 aa). The interval 857-1047 is shikimate kinase; the sequence is DKGVIVIGMR…VPTGRSTAVV (191 aa). Residue 864–871 participates in ATP binding; that stretch reads GMRGTGKS. Residues 1048–1257 are 3-dehydroquinase; the sequence is LTLPDLNNVA…NDDGLLTIGE (210 aa). Arginine 1193 serves as the catalytic Schiff-base intermediate with substrate; for 3-dehydroquinate dehydratase activity. The shikimate dehydrogenase stretch occupies residues 1270–1550; sequence AKKFWVIGSP…EIIHRAVVEE (281 aa).

This sequence in the N-terminal section; belongs to the sugar phosphate cyclases superfamily. Dehydroquinate synthase family. In the 2nd section; belongs to the EPSP synthase family. The protein in the 3rd section; belongs to the shikimate kinase family. It in the 4th section; belongs to the type-I 3-dehydroquinase family. This sequence in the C-terminal section; belongs to the shikimate dehydrogenase family. In terms of assembly, homodimer. The cofactor is Zn(2+).

It localises to the cytoplasm. It catalyses the reaction 7-phospho-2-dehydro-3-deoxy-D-arabino-heptonate = 3-dehydroquinate + phosphate. The catalysed reaction is 3-dehydroquinate = 3-dehydroshikimate + H2O. The enzyme catalyses shikimate + NADP(+) = 3-dehydroshikimate + NADPH + H(+). It carries out the reaction shikimate + ATP = 3-phosphoshikimate + ADP + H(+). It catalyses the reaction 3-phosphoshikimate + phosphoenolpyruvate = 5-O-(1-carboxyvinyl)-3-phosphoshikimate + phosphate. It participates in metabolic intermediate biosynthesis; chorismate biosynthesis; chorismate from D-erythrose 4-phosphate and phosphoenolpyruvate: step 2/7. Its pathway is metabolic intermediate biosynthesis; chorismate biosynthesis; chorismate from D-erythrose 4-phosphate and phosphoenolpyruvate: step 3/7. The protein operates within metabolic intermediate biosynthesis; chorismate biosynthesis; chorismate from D-erythrose 4-phosphate and phosphoenolpyruvate: step 4/7. It functions in the pathway metabolic intermediate biosynthesis; chorismate biosynthesis; chorismate from D-erythrose 4-phosphate and phosphoenolpyruvate: step 5/7. It participates in metabolic intermediate biosynthesis; chorismate biosynthesis; chorismate from D-erythrose 4-phosphate and phosphoenolpyruvate: step 6/7. The AROM polypeptide catalyzes 5 consecutive enzymatic reactions in prechorismate polyaromatic amino acid biosynthesis. The sequence is that of Pentafunctional AROM polypeptide from Candida dubliniensis (strain CD36 / ATCC MYA-646 / CBS 7987 / NCPF 3949 / NRRL Y-17841) (Yeast).